We begin with the raw amino-acid sequence, 470 residues long: Dynein axonemal assembly factor 11 (470 aa).

4 LRR repeats span residues 20 to 43 (IFSL…DKWC), 44 to 65 (RELK…VSKL), 66 to 89 (KKLE…GCES), and 90 to 110 (LQKL…NSLQ). In terms of domain architecture, LRRCT spans 128 to 146 (YEGYRQYVVATLPQLKWLD). Residues 177 to 288 (LRKRAAEREK…NRSEEELKKK (112 aa)) adopt a coiled-coil conformation. The segment at 182 to 265 (AEREKATNNL…SQYTPESRLE (84 aa)) is disordered. Basic and acidic residues predominate over residues 194 to 213 (KQKEGRKAQEKKPGFDRRWY). One can recognise a CS domain in the interval 303-395 (VNESKLDFSL…TEMIQTKRAK (93 aa)). Positions 447–470 (HRNSARDTADSEDFIDNAEVPPLV) are disordered.

The protein belongs to the tilB family.

It is found in the cytoplasm. The protein resides in the cell projection. Its subcellular location is the cilium. The protein localises to the dynein axonemal particle. It localises to the flagellum. Functionally, involved in dynein arm assembly, is important for expression and transporting outer dynein arm (ODA) proteins from the cytoplasm to the cilia. The polypeptide is Dynein axonemal assembly factor 11 (dnaaf11) (Xenopus tropicalis (Western clawed frog)).